The chain runs to 623 residues: MPAVYGDRMTTFEDSEKESEYGYIRKVSGPVVVADGMNGAAMYELVRVGHDNLIGEIIRLEGDSATIQVYEETGGLTVNDPVLRTHKPLSVELGPGILGNIFDGIQRPLKTIAKRSGDVYIPRGVSVPPLDKDTQWDFQPKKLGVGDLLTGGDLYAIVDENSLMQHHVVLPPDAMGKITYIAPAGNYTIQDTVLELEFQGVVKKFTMLQTWPVRTPRPVASKLAADTPLLTGQRVLDALFPSVLGGTCAILGAFGCGKTVISQALSKYSNSDAVVYVGCGERGNEMAEVLMDFPQLTMTLPDGREESVMKRTTLVANTSNMPVAAREASIYTGITIAEYFRDMGYNVSMMADSGSRWAEALREISGRLAEMPADSGYPAYLAARLASFYEAAGKVKCLGGPERNGSVTIVGAVSPPGGDFSDPVTSATLSIVQVFWGLDKKLAQRKHFPSVNWLISYSKYSGALESFYEKFDSEFIDIRTKAREVLQREDDLNEIVQLVGKDALAETDKITLDTAKLLREDYLAQNAFTAYDKFCPFYKSVWMMRNIIHFYNLANQAVERGAGSDGQKITYSLIKLRLGDLFYRLVSQKFEDPAEGEDALVAKFKKLNEDLTAAFRNLEDETR.

Residue 252–259 (GAFGCGKT) participates in ATP binding.

This sequence belongs to the ATPase alpha/beta chains family. As to quaternary structure, V-ATPase is a heteromultimeric enzyme composed of a peripheral catalytic V1 complex (main components: subunits A, B, C, D, E, and F) attached to an integral membrane V0 proton pore complex (main component: the proteolipid protein).

It carries out the reaction ATP + H2O + 4 H(+)(in) = ADP + phosphate + 5 H(+)(out). Functionally, catalytic subunit of the peripheral V1 complex of vacuolar ATPase. V-ATPase vacuolar ATPase is responsible for acidifying a variety of intracellular compartments in eukaryotic cells. This Beta vulgaris (Sugar beet) protein is V-type proton ATPase catalytic subunit A.